Here is a 279-residue protein sequence, read N- to C-terminus: RNases MRP/P 32.9 kDa subunit (279 aa).

S64 bears the Phosphoserine mark.

The protein belongs to the eukaryotic/archaeal RNase P protein component 1 family. As to quaternary structure, component of nuclear RNase P and RNase MRP complexes. RNase P consists of an RNA moiety and at least 9 protein subunits including POP1, POP3, POP4, POP5, POP6, POP7, POP8, RPP1 and RPR2. RNase MRP complex consists of an RNA moiety and at least 10 protein subunits including POP1, POP3, POP4, POP5, POP6, POP7, POP8, RMP1, RPP1 and SNM1, many of which are shared with the RNase P complex.

The protein resides in the nucleus. In terms of biological role, required for 5.8S rRNA and tRNA processing; associated with RNase MRP and RNase P. In Saccharomyces cerevisiae (strain ATCC 204508 / S288c) (Baker's yeast), this protein is RNases MRP/P 32.9 kDa subunit (POP4).